We begin with the raw amino-acid sequence, 338 residues long: Malate dehydrogenase, mitochondrial (338 aa).

Residues 1-24 constitute a mitochondrion transit peptide; it reads MLSALARPASAVLRRSFSTSAQNN. NAD(+)-binding positions include 31 to 37 and D57; that span reads GASGGIG. A glycan (O-linked (GlcNAc) serine) is linked at S33. An N6-acetyllysine; alternate mark is found at K78 and K91. Residues K78 and K91 each carry the N6-succinyllysine; alternate modification. Positions 104 and 110 each coordinate substrate. NAD(+)-binding positions include N117 and 140 to 142; that span reads IAN. A substrate-binding site is contributed by N142. K165 carries the N6-acetyllysine modification. R176 contributes to the substrate binding site. The residue at position 185 (K185) is an N6-acetyllysine; alternate. N6-succinyllysine; alternate is present on K185. H200 serves as the catalytic Proton acceptor. At K203 the chain carries N6-succinyllysine. Residues K215 and K239 each carry the N6-acetyllysine; alternate modification. K215 and K239 each carry N6-succinyllysine; alternate. The residue at position 239 (K239) is an N6-malonyllysine; alternate. Position 246 is a phosphoserine (S246). M251 is a binding site for NAD(+). K269 is subject to N6-succinyllysine. N6-acetyllysine; alternate is present on residues K296, K301, K307, K314, and K324. K296, K301, K307, K314, and K324 each carry N6-succinyllysine; alternate. Residue K307 is modified to N6-malonyllysine; alternate. The residue at position 326 (S326) is a Phosphoserine. N6-acetyllysine; alternate occurs at positions 328, 329, and 335. K328 carries the post-translational modification N6-succinyllysine; alternate. An N6-malonyllysine; alternate modification is found at K329. Residue K335 is modified to N6-succinyllysine; alternate.

The protein belongs to the LDH/MDH superfamily. MDH type 1 family. Homodimer. Post-translationally, acetylation is enhanced after treatment either with trichostin A (TCA) or with nicotinamide (NAM) with the appearance of tri- and tetraacetylations. Glucose also increases acetylation.

It localises to the mitochondrion matrix. It catalyses the reaction (S)-malate + NAD(+) = oxaloacetate + NADH + H(+). Its activity is regulated as follows. Enzyme activity is enhanced by acetylation. The protein is Malate dehydrogenase, mitochondrial (MDH2) of Pongo abelii (Sumatran orangutan).